The primary structure comprises 344 residues: Probable aldo-keto reductase 1 (344 aa).

Y63 serves as the catalytic Proton donor. Residue H130 participates in substrate binding. 209-219 (SPLGLGFFAAG) contributes to the NADP(+) binding site.

This sequence belongs to the aldo/keto reductase family.

The protein is Probable aldo-keto reductase 1 of Arabidopsis thaliana (Mouse-ear cress).